The chain runs to 448 residues: ATP-dependent protease ATPase subunit HslU (448 aa).

Residues Val21, 63–68 (GVGKTE), Asp260, Glu326, and Arg398 contribute to the ATP site.

The protein belongs to the ClpX chaperone family. HslU subfamily. As to quaternary structure, a double ring-shaped homohexamer of HslV is capped on each side by a ring-shaped HslU homohexamer. The assembly of the HslU/HslV complex is dependent on binding of ATP.

The protein localises to the cytoplasm. In terms of biological role, ATPase subunit of a proteasome-like degradation complex; this subunit has chaperone activity. The binding of ATP and its subsequent hydrolysis by HslU are essential for unfolding of protein substrates subsequently hydrolyzed by HslV. HslU recognizes the N-terminal part of its protein substrates and unfolds these before they are guided to HslV for hydrolysis. The chain is ATP-dependent protease ATPase subunit HslU from Sulfurihydrogenibium sp. (strain YO3AOP1).